The following is a 469-amino-acid chain: Cysteine protease ATG4 (469 aa).

A disordered region spans residues 48-99; that stretch reads KNIKADDHHPQTPPSVLKAETETQEAHDTAQPPNPPTNAPDTPPDSISSSFS. Over residues 66-75 the composition is skewed to basic and acidic residues; the sequence is AETETQEAHD. Pro residues predominate over residues 79–90; it reads PPNPPTNAPDTP. Cysteine 172 acts as the Nucleophile in catalysis. Catalysis depends on residues aspartate 362 and histidine 364. The segment at 443 to 469 is disordered; sequence GSSEGRESAIDEVETLSDDDTDTIHEA. The span at 452–463 shows a compositional bias: acidic residues; that stretch reads IDEVETLSDDDT.

The protein belongs to the peptidase C54 family. In terms of assembly, interacts with ATG8.

Its subcellular location is the cytoplasm. It localises to the nucleus. It is found in the preautophagosomal structure. The enzyme catalyses [protein]-C-terminal L-amino acid-glycyl-phosphatidylethanolamide + H2O = [protein]-C-terminal L-amino acid-glycine + a 1,2-diacyl-sn-glycero-3-phosphoethanolamine. Its function is as follows. Cysteine protease that plays a key role in cytoplasm to vacuole transport (Cvt) and autophagy by mediating both proteolytic activation and delipidation of ATG8. Required for selective autophagic degradation of the nucleus (nucleophagy) as well as for mitophagy which contributes to regulate mitochondrial quantity and quality by eliminating the mitochondria to a basal level to fulfill cellular energy requirements and preventing excess ROS production. The protease activity is required for proteolytic activation of ATG8: cleaves the C-terminal amino acid of ATG8 to reveal a C-terminal glycine. ATG8 ubiquitin-like activity requires the exposure of the glycine at the C-terminus for its conjugation to phosphatidylethanolamine (PE) and its insertion to membranes, which is necessary for autophagy. The ATG8-PE conjugate mediates tethering between adjacent membranes and stimulates membrane hemifusion, leading to expansion of the autophagosomal membrane during autophagy. In addition to the protease activity, also catalyzes deconjugation of PE-conjugated forms of ATG8 during macroautophagy: ATG8 delipidation is required to release the protein from membranes, which facilitates multiple events during macroautophagy, and especially for efficient autophagosome biogenesis, the assembly of ATG9-containing tubulovesicular clusters into phagophores/autophagosomes, and for the disassembly of PAS-associated ATG components. ATG8 delipidation by ATG4 also recycles ATG8-PE generated on inappropriate membranes to maintain a reservoir of unlipidated ATG8 that is required for autophagosome formation at the PAS. Autophagy is required for proper vegetative growth, asexual/sexual reproduction, and full virulence. Autophagy is particularly involved in the biosynthesis of deoxynivalenol (DON), an important virulence determinant. This is Cysteine protease ATG4 from Gibberella zeae (strain ATCC MYA-4620 / CBS 123657 / FGSC 9075 / NRRL 31084 / PH-1) (Wheat head blight fungus).